Here is a 241-residue protein sequence, read N- to C-terminus: Pyridoxine 5'-phosphate synthase (241 aa).

A 3-amino-2-oxopropyl phosphate-binding site is contributed by Asn7. 9–10 (DH) provides a ligand contact to 1-deoxy-D-xylulose 5-phosphate. Arg18 serves as a coordination point for 3-amino-2-oxopropyl phosphate. His43 (proton acceptor) is an active-site residue. 1-deoxy-D-xylulose 5-phosphate is bound by residues Arg45 and His50. Glu70 serves as the catalytic Proton acceptor. Thr100 contributes to the 1-deoxy-D-xylulose 5-phosphate binding site. Catalysis depends on His191, which acts as the Proton donor. 3-amino-2-oxopropyl phosphate is bound by residues Ser192 and 213 to 214 (GH).

It belongs to the PNP synthase family. As to quaternary structure, homooctamer; tetramer of dimers.

The protein localises to the cytoplasm. The enzyme catalyses 3-amino-2-oxopropyl phosphate + 1-deoxy-D-xylulose 5-phosphate = pyridoxine 5'-phosphate + phosphate + 2 H2O + H(+). Its pathway is cofactor biosynthesis; pyridoxine 5'-phosphate biosynthesis; pyridoxine 5'-phosphate from D-erythrose 4-phosphate: step 5/5. Catalyzes the complicated ring closure reaction between the two acyclic compounds 1-deoxy-D-xylulose-5-phosphate (DXP) and 3-amino-2-oxopropyl phosphate (1-amino-acetone-3-phosphate or AAP) to form pyridoxine 5'-phosphate (PNP) and inorganic phosphate. This is Pyridoxine 5'-phosphate synthase from Nitrosomonas eutropha (strain DSM 101675 / C91 / Nm57).